Reading from the N-terminus, the 111-residue chain is Disintegrin subunit alpha (111 aa).

The first 20 residues, 1-20 (MIQVLLVTICLAVFPYQGSS), serve as a signal peptide directing secretion. A propeptide spanning residues 21–44 (IILESGNVNDYEVVYPRKITPLPK) is cleaved from the precursor. The region spanning 45–111 (GAVQPKNPCC…GDCPRKHFYA (67 aa)) is the Disintegrin domain. Intrachain disulfides connect cysteine 53–cysteine 76, cysteine 67–cysteine 73, cysteine 72–cysteine 97, and cysteine 85–cysteine 104. The Cell attachment site signature appears at 89-91 (RGD). Positions 110-111 (YA) are excised as a propeptide.

The protein belongs to the disintegrin family. Dimeric disintegrin subfamily. In terms of assembly, heterodimer with subunit beta; disulfide-linked. As to expression, expressed by the venom gland.

Its subcellular location is the secreted. In terms of biological role, acts by binding to alpha-IIb/beta-3 (ITGA2B/ITGB3) on the platelet surface and inhibits both ADP-induced platelet aggregation and platelet aggregate dissociation in human platelet-rich plasma. The sequence is that of Disintegrin subunit alpha from Agkistrodon piscivorus leucostoma (Western cottonmouth).